The following is a 463-amino-acid chain: Cysteine--tRNA ligase (463 aa).

Cys27 serves as a coordination point for Zn(2+). Positions 29 to 39 match the 'HIGH' region motif; it reads PTVYGLIHIGN. The Zn(2+) site is built by Cys207, His232, and Glu236. The short motif at 264–268 is the 'KMSKS' region element; the sequence is KMSKS. Residue Lys267 coordinates ATP.

This sequence belongs to the class-I aminoacyl-tRNA synthetase family. Monomer. Requires Zn(2+) as cofactor.

It is found in the cytoplasm. It catalyses the reaction tRNA(Cys) + L-cysteine + ATP = L-cysteinyl-tRNA(Cys) + AMP + diphosphate. The chain is Cysteine--tRNA ligase from Pseudothermotoga lettingae (strain ATCC BAA-301 / DSM 14385 / NBRC 107922 / TMO) (Thermotoga lettingae).